Reading from the N-terminus, the 482-residue chain is Potential E3 ubiquitin-protein ligase ariadne-2 (482 aa).

Residues 125–334 are TRIAD supradomain; it reads AKGYCSVCAM…SEYYECSRYK (210 aa). Zn(2+)-binding residues include cysteine 129, cysteine 132, cysteine 145, histidine 147, cysteine 150, cysteine 153, cysteine 172, cysteine 177, cysteine 218, cysteine 223, cysteine 239, cysteine 242, cysteine 247, cysteine 250, histidine 255, cysteine 260, cysteine 287, and cysteine 290. The segment at 129–177 adopts an RING-type 1 zinc-finger fold; that stretch reads CSVCAMDGYTELPHLTCGHCFCEHCWKSHVESRLSEGVASRIECMESEC. An IBR-type zinc finger spans residues 198–260; it reads LKYERFLLRD…GADYHAPTSC (63 aa). Residues 287 to 316 form an RING-type 2; atypical zinc finger; sequence CPQCHSCIEKAGGCNHIQCTRCRHHFCWMC. Cysteine 300 is a catalytic residue. Residues cysteine 305, cysteine 308, cysteine 313, cysteine 316, histidine 323, and cysteine 330 each coordinate Zn(2+). The stretch at 433 to 459 forms a coiled coil; it reads FEYQQAQLEKEVEELAWAVERADGTAR.

The protein belongs to the RBR family. Ariadne subfamily.

It localises to the nucleus. It catalyses the reaction [E2 ubiquitin-conjugating enzyme]-S-ubiquitinyl-L-cysteine + [acceptor protein]-L-lysine = [E2 ubiquitin-conjugating enzyme]-L-cysteine + [acceptor protein]-N(6)-ubiquitinyl-L-lysine.. In terms of biological role, might act as an E3 ubiquitin-protein ligase, or as part of E3 complex, which accepts ubiquitin from specific E2 ubiquitin-conjugating enzymes, such as UBC-2/UBE2L3, and then transfers it to substrates. This chain is Potential E3 ubiquitin-protein ligase ariadne-2, found in Caenorhabditis elegans.